The following is a 174-amino-acid chain: Small ribosomal subunit protein uS5 (174 aa).

In terms of domain architecture, S5 DRBM spans 19-82 (LREKMVAINR…DEARRKLKKI (64 aa)).

This sequence belongs to the universal ribosomal protein uS5 family. In terms of assembly, part of the 30S ribosomal subunit. Contacts proteins S4 and S8.

Functionally, with S4 and S12 plays an important role in translational accuracy. Located at the back of the 30S subunit body where it stabilizes the conformation of the head with respect to the body. This is Small ribosomal subunit protein uS5 from Aromatoleum aromaticum (strain DSM 19018 / LMG 30748 / EbN1) (Azoarcus sp. (strain EbN1)).